The chain runs to 146 residues: Protein archease (146 aa).

Residues aspartate 16, aspartate 145, and isoleucine 146 each coordinate Ca(2+).

The protein belongs to the archease family.

Its function is as follows. Activates the tRNA-splicing ligase complex by facilitating the enzymatic turnover of catalytic subunit RtcB. Acts by promoting the guanylylation of RtcB, a key intermediate step in tRNA ligation. Can also alter the NTP specificity of RtcB such that ATP, dGTP or ITP is used efficiently. This chain is Protein archease, found in Methanosarcina mazei (strain ATCC BAA-159 / DSM 3647 / Goe1 / Go1 / JCM 11833 / OCM 88) (Methanosarcina frisia).